The primary structure comprises 247 residues: Adenosylcobinamide-GDP ribazoletransferase (247 aa).

5 helical membrane-spanning segments follow: residues 1–21, 37–57, 61–81, 109–129, and 176–196; these read MLRL…PFSF, LVGL…ALAL, VADL…HLDG, AVGV…LFAV, and VAVA…LPGI.

This sequence belongs to the CobS family. Mg(2+) serves as cofactor.

The protein resides in the cell inner membrane. The enzyme catalyses alpha-ribazole + adenosylcob(III)inamide-GDP = adenosylcob(III)alamin + GMP + H(+). It carries out the reaction alpha-ribazole 5'-phosphate + adenosylcob(III)inamide-GDP = adenosylcob(III)alamin 5'-phosphate + GMP + H(+). Its pathway is cofactor biosynthesis; adenosylcobalamin biosynthesis; adenosylcobalamin from cob(II)yrinate a,c-diamide: step 7/7. Joins adenosylcobinamide-GDP and alpha-ribazole to generate adenosylcobalamin (Ado-cobalamin). Also synthesizes adenosylcobalamin 5'-phosphate from adenosylcobinamide-GDP and alpha-ribazole 5'-phosphate. This Geotalea daltonii (strain DSM 22248 / JCM 15807 / FRC-32) (Geobacter daltonii) protein is Adenosylcobinamide-GDP ribazoletransferase.